We begin with the raw amino-acid sequence, 102 residues long: Small ribosomal subunit protein bS6 (102 aa).

The protein belongs to the bacterial ribosomal protein bS6 family.

Its function is as follows. Binds together with bS18 to 16S ribosomal RNA. The polypeptide is Small ribosomal subunit protein bS6 (Solidesulfovibrio magneticus (strain ATCC 700980 / DSM 13731 / RS-1) (Desulfovibrio magneticus)).